Reading from the N-terminus, the 606-residue chain is Mannan endo-1,4-beta-mannosidase A (606 aa).

The N-terminal stretch at 1-19 (MKSLNVILTLLSLIISVLS) is a signal peptide. Positions 22-140 (VYYEAEDGKL…WMWVDAFVIN (119 aa)) constitute a CBM6 domain. In terms of domain architecture, GH26 spans 164 to 458 (PAAKKLYDFL…FNHKTVMNMD (295 aa)). Residue W285 coordinates substrate. E318 serves as the catalytic Proton donor. 2 residues coordinate substrate: W323 and Y378. The active-site Nucleophile is E406. The interval 472–489 (SGSSHNGNSESNSNTGNS) is linker. 3 consecutive CBM10 domains span residues 491 to 527 (ECWS…CGIV), 530 to 566 (SCWS…CGIV), and 569 to 605 (SCWA…CGIL). W493 provides a ligand contact to substrate.

It belongs to the glycosyl hydrolase 26 family.

It carries out the reaction Random hydrolysis of (1-&gt;4)-beta-D-mannosidic linkages in mannans, galactomannans and glucomannans.. Functionally, hydrolyzes 1,4-beta linked polysaccharide backbones of mannans, one of the major hemicellulose components in hardwoods and softwoods. Shows very high activity against mannohexaose but not against mannopentaose and smaller mannooligosaccharides. The major products released from mannooligosaccharide hydrolysis are mannose and mannobiose. The reiterated 40 AA domain is involved in binding the cellulase-hemicellulase complex. The sequence is that of Mannan endo-1,4-beta-mannosidase A (MANA) from Piromyces sp.